Consider the following 254-residue polypeptide: HLA class II histocompatibility antigen, DR alpha chain (254 aa).

A signal peptide spans 1-25 (MAISGVPVLGFFIIAVLMSAQESWA). The alpha-1 stretch occupies residues 26 to 109 (IKEEHVIIQA…KRSNYTPITN (84 aa)). Topologically, residues 26–216 (IKEEHVIIQA…APSPLPETTE (191 aa)) are extracellular. Asn103 and Asn143 each carry an N-linked (GlcNAc...) asparagine glycan. The tract at residues 110–203 (VPPEVTVLTN…GLDEPLLKHW (94 aa)) is alpha-2. Positions 112–204 (PEVTVLTNSP…LDEPLLKHWE (93 aa)) constitute an Ig-like C1-type domain. The cysteines at positions 132 and 188 are disulfide-linked. The segment at 204–216 (EFDAPSPLPETTE) is connecting peptide. The chain crosses the membrane as a helical span at residues 217-239 (NVVCALGLTVGLVGIIIGTIFII). Topologically, residues 240 to 254 (KGLRKSNAAERRGPL) are cytoplasmic. Lys244 is covalently cross-linked (Glycyl lysine isopeptide (Lys-Gly) (interchain with G-Cter in ubiquitin)).

Belongs to the MHC class II family. As to quaternary structure, heterotrimer that consists of an alpha chain HLA-DRA, a beta chain HLA-DRB and a peptide (peptide-MHCII). Newly synthesized alpha and beta chains forms a heterodimer (MHCII) that associates with the CD74/invariant chain (Ii) in the endoplasmic reticulum (ER). Ii is a trimer composed of three subunits and each subunit interacts with one MHCII dimer, blocking the peptide-binding cleft. As a result, MHCII molecules cannot bind peptides present in the ER. The complex of MHCII and CD74/Ii is transported in vesicles from ER to Golgi to lysosomes, where it encounters antigenic peptides generated via proteolysis of endocytosed antigens. MHCII dimers are dissociated from CD74/Ii by the combined action of proteolysis and HLA-DM. Lysosomal enzymes such as cathepsin, degrade CD74/Ii leaving a 24 amino acid remnant called class II-associated Ii or CLIP. Interacts (via the peptide binding cleft) with CLIP; this interaction inhibits antigen peptide binding before entry in the endosomal compartment. The displacement of CLIP and replacement by a high affinity peptide in lysosomes is performed by HLA-DM heterodimer. HLA-DM catalyzes CLIP dissociation from MHCII, stabilizes empty MHCII and mediates the selection of high affinity peptides. Interacts with HLA-DM heterodimer; this interaction is direct. Interacts (via alpha-1 domain) with TCR (via CDRs). Interacts (via alpha-2 domain) with CD4 (via Ig-like V-type domain); this interaction increases the affinity of TCR for peptide-MHCII. In terms of assembly, (Microbial infection) Interacts with Epstein-Barr virus BZLF2/gp42. (Microbial infection) Interacts with Staphylococcus aureus enterotoxin A/entA, enterotoxin B/entB, enterotoxin C1/entC1, enterotoxin D/entD, and enterotoxin H/entH. In terms of processing, ubiquitinated by MARCHF1 or MARCHF8 at Lys-244 leading to down-regulation of MHCII. When associated with ubiquitination of the beta chain at 'Lys-254', the down-regulation of MHCII may be highly effective. As to expression, expressed in professional APCs: macrophages, dendritic cells and B cells (at protein level). Expressed in thymic epithelial cells (at protein level).

Its subcellular location is the cell membrane. The protein localises to the endoplasmic reticulum membrane. The protein resides in the early endosome membrane. It localises to the late endosome membrane. It is found in the lysosome membrane. Its subcellular location is the autolysosome membrane. An alpha chain of antigen-presenting major histocompatibility complex class II (MHCII) molecule. In complex with the beta chain HLA-DRB, displays antigenic peptides on professional antigen presenting cells (APCs) for recognition by alpha-beta T cell receptor (TCR) on HLA-DR-restricted CD4-positive T cells. This guides antigen-specific T-helper effector functions, both antibody-mediated immune response and macrophage activation, to ultimately eliminate the infectious agents and transformed cells. Typically presents extracellular peptide antigens of 10 to 30 amino acids that arise from proteolysis of endocytosed antigens in lysosomes. In the tumor microenvironment, presents antigenic peptides that are primarily generated in tumor-resident APCs likely via phagocytosis of apoptotic tumor cells or macropinocytosis of secreted tumor proteins. Presents peptides derived from intracellular proteins that are trapped in autolysosomes after macroautophagy, a mechanism especially relevant for T cell selection in the thymus and central immune tolerance. The selection of the immunodominant epitopes follows two processing modes: 'bind first, cut/trim later' for pathogen-derived antigenic peptides and 'cut first, bind later' for autoantigens/self-peptides. The anchor residue at position 1 of the peptide N-terminus, usually a large hydrophobic residue, is essential for high affinity interaction with MHCII molecules. This is HLA class II histocompatibility antigen, DR alpha chain (HLA-DRA) from Homo sapiens (Human).